The primary structure comprises 468 residues: Membrane-associated tyrosine- and threonine-specific cdc2-inhibitory kinase wee-1.1 (468 aa).

A compositionally biased stretch (basic and acidic residues) spans 25 to 42 (SKDEPNKLNTSRKLEVTT). The disordered stretch occupies residues 25-63 (SKDEPNKLNTSRKLEVTTKKNQSNNKKRPPPINKARKSL). The span at 49-61 (NKKRPPPINKARK) shows a compositional bias: basic residues. The 252-residue stretch at 106–357 (FNFDKNLGKG…SELMKNHVVK (252 aa)) folds into the Protein kinase domain. ATP is bound by residues 112–120 (LGKGSFGEV) and K135. Catalysis depends on D224, which acts as the Proton acceptor. Mg(2+) contacts are provided by N229 and D242. The tract at residues 425–453 (EDEYEVFSPPRTPVKKSRYQQTMPEVSPP) is disordered.

It belongs to the protein kinase superfamily. Ser/Thr protein kinase family. WEE1 subfamily. As to expression, in the 12-13-cell embryo, expressed in the E blastomere. In the 16-cell embryo, expressed in the eight AB cells.

It localises to the nucleus. It carries out the reaction L-seryl-[protein] + ATP = O-phospho-L-seryl-[protein] + ADP + H(+). The enzyme catalyses L-threonyl-[protein] + ATP = O-phospho-L-threonyl-[protein] + ADP + H(+). Its function is as follows. Acts as a negative regulator of entry into mitosis (G2 to M transition) by phosphorylation of the CDK1 kinase. The protein is Membrane-associated tyrosine- and threonine-specific cdc2-inhibitory kinase wee-1.1 (wee-1.1) of Caenorhabditis elegans.